The chain runs to 377 residues: DnaJ-related protein SCJ1 (377 aa).

The N-terminal stretch at 1–21 (MIPKLYIHLILSLLLLPLILA) is a signal peptide. Residues 23-88 (DYYAILEIDK…EKKKIYDQFG (66 aa)) enclose the J domain. The CR-type zinc finger occupies 156–237 (GSSIEFTLNL…CHGKKVTKKN (82 aa)). CXXCXGXG motif repeat units follow at residues 169-176 (CDACHGSG), 185-192 (CPDCQGRG), 211-218 (CGRCGGTG), and 225-232 (CKTCHGKK). The short motif at 288–290 (RGD) is the Cell attachment site element. The Prevents secretion from ER signature appears at 374–377 (KDEL).

It is found in the endoplasmic reticulum lumen. Regulates protein folding in the endoplasmic reticulum lumen. Probably acts as a J-protein for the Hsp70-type chaperone KAR2 by stimulating its ATP-dependent reaction cycle and initiating folding reactions. Also involved in the endoplasmic reticulum-associated degradation (ERAD) process. Cooperates with KAR2 and another J-protein JEM1 to facilitate the export of ERAD substrates to the cytoplasm by maintaining them in a translocation-competent state and preventing their aggregation in the endoplasmic reticulum lumen. The chain is DnaJ-related protein SCJ1 (SCJ1) from Saccharomyces cerevisiae (strain ATCC 204508 / S288c) (Baker's yeast).